We begin with the raw amino-acid sequence, 132 residues long: Small ribosomal subunit protein uS8 (132 aa).

It belongs to the universal ribosomal protein uS8 family. As to quaternary structure, part of the 30S ribosomal subunit. Contacts proteins S5 and S12.

In terms of biological role, one of the primary rRNA binding proteins, it binds directly to 16S rRNA central domain where it helps coordinate assembly of the platform of the 30S subunit. This is Small ribosomal subunit protein uS8 from Corynebacterium glutamicum (strain R).